Consider the following 335-residue polypeptide: Ornithine carbamoyltransferase, catabolic (335 aa).

Carbamoyl phosphate contacts are provided by residues 59–62, Q86, R110, and 137–140; these read STRT and HPTQ. L-ornithine-binding positions include N169, D233, and 237 to 238; that span reads SM. Carbamoyl phosphate is bound by residues 274–275 and R319; that span reads CL.

The protein belongs to the aspartate/ornithine carbamoyltransferase superfamily. OTCase family.

The protein localises to the cytoplasm. The enzyme catalyses carbamoyl phosphate + L-ornithine = L-citrulline + phosphate + H(+). It functions in the pathway amino-acid degradation; L-arginine degradation via ADI pathway; carbamoyl phosphate from L-arginine: step 2/2. Functionally, reversibly catalyzes the transfer of the carbamoyl group from carbamoyl phosphate (CP) to the N(epsilon) atom of ornithine (ORN) to produce L-citrulline. This chain is Ornithine carbamoyltransferase, catabolic (arcB), found in Bacillus licheniformis (strain ATCC 14580 / DSM 13 / JCM 2505 / CCUG 7422 / NBRC 12200 / NCIMB 9375 / NCTC 10341 / NRRL NRS-1264 / Gibson 46).